The following is a 163-amino-acid chain: UPF0262 protein RPB_4349 (163 aa).

It belongs to the UPF0262 family.

The chain is UPF0262 protein RPB_4349 from Rhodopseudomonas palustris (strain HaA2).